We begin with the raw amino-acid sequence, 149 residues long: Tetracenomycin polyketide synthase protein TcmJ (149 aa).

Residues histidine 51–valine 117 enclose the Cupin type-2 domain. Residues proline 127–glycine 149 are disordered.

The tetracenomycin polyketide synthase (TCM PKS) is composed of a ketosynthase complex (TcmKL), an acyl carrier protein (TcmM), a cyclase (TcmN) and a probable second cyclase (TcmJ).

The enzyme catalyses 10 malonyl-CoA + 8 H(+) = tetracenomycin F2 + 10 CO2 + 10 CoA + 2 H2O. It functions in the pathway antibiotic biosynthesis; tetracenomycin C biosynthesis. Its function is as follows. Involved in the biosynthesis of tetracenomycin C (TCM C). Part of a type II polyketide synthase (PKS) that catalyzes the synthesis of tetracenomycin F2 (TCM F2), a precursor of TCM C, from malonyl-CoA. TcmJ, while not absolutely required, greatly increases the tetracenomycin F2 production. It probably acts as a cyclase. The sequence is that of Tetracenomycin polyketide synthase protein TcmJ from Streptomyces glaucescens.